The primary structure comprises 80 residues: Large ribosomal subunit protein bL31 (80 aa).

Zn(2+) is bound by residues Cys-16, Cys-18, Cys-38, and Cys-41.

This sequence belongs to the bacterial ribosomal protein bL31 family. Type A subfamily. Part of the 50S ribosomal subunit. The cofactor is Zn(2+).

Binds the 23S rRNA. This chain is Large ribosomal subunit protein bL31, found in Mycobacterium bovis (strain ATCC BAA-935 / AF2122/97).